A 1226-amino-acid polypeptide reads, in one-letter code: 3-hydroxy-3-methylglutaryl-coenzyme A reductase (1226 aa).

5 helical membrane-spanning segments follow: residues 17-37 (IETI…ILSG), 224-244 (ILVV…LFLA), 252-272 (FWLS…TLPM), 337-357 (VGNM…VGVN), and 373-393 (LLAM…TIMV). An SSD domain is found at 223-391 (DILVVLTGYI…FTLYTAVLTI (169 aa)). A disordered region spans residues 428–449 (LSRKSSKQSVTEPETTKNLRQR). The span at 434 to 445 (KQSVTEPETTKN) shows a compositional bias: polar residues. A helical membrane pass occupies residues 481 to 501 (LLLIASFLTLHILNFCTTLTS). Disordered regions lie at residues 683-702 (APAP…PPPL) and 722-742 (LPIR…EVEP). Over residues 685 to 702 (APAPAPEPEPPVNRPPPL) the composition is skewed to pro residues. The active-site Charge relay system is the Glu-869. 875 to 881 (STSRGCK) is a CoA binding site. Residues 936–938 (SRF) and 963–971 (DAMGMNMIS) contribute to the NADP(+) site. Residue Lys-1001 is the Charge relay system of the active site. 1030-1032 (VLK) serves as a coordination point for CoA. Asp-1077 (charge relay system) is an active-site residue. A helical membrane pass occupies residues 1150-1170 (IIASAVMAGELSLISALAAGH). 1174-1175 (AH) is a CoA binding site. His-1175 functions as the Proton donor in the catalytic mechanism. 1179 to 1180 (NR) is an NADP(+) binding site. The disordered stretch occupies residues 1182–1226 (QLNTPMPSRPHTPGPEDVSHVQQLPTPSASDDKGVTAQGYVVEAK). Positions 1201-1210 (HVQQLPTPSA) are enriched in polar residues.

It belongs to the HMG-CoA reductase family.

Its subcellular location is the endoplasmic reticulum membrane. It catalyses the reaction (R)-mevalonate + 2 NADP(+) + CoA = (3S)-3-hydroxy-3-methylglutaryl-CoA + 2 NADPH + 2 H(+). Its pathway is metabolic intermediate biosynthesis; (R)-mevalonate biosynthesis; (R)-mevalonate from acetyl-CoA: step 3/3. In terms of biological role, HMG-CoA reductase; part of the first module of ergosterol biosynthesis pathway that includes the early steps of the pathway, conserved across all eukaryotes, and which results in the formation of mevalonate from acetyl-coenzyme A (acetyl-CoA). This module also plays a key role in the biosynthesis of triterpenes such as ganoderic acids (GA), a group of highly oxygenated lanostane-type triterpenoids which are well recognized as a main group of unique bioactive compounds in the medicinal mushroom Ganoderma lucidum. In this module, the acetyl-CoA acetyltransferase catalyzes the formation of acetoacetyl-CoA. The hydroxymethylglutaryl-CoA synthase HMGS then condenses acetyl-CoA with acetoacetyl-CoA to form HMG-CoA. The rate-limiting step of the early module is the reduction to mevalonate by the 3-hydroxy-3-methylglutaryl-coenzyme A (HMG-CoA) reductase. This chain is 3-hydroxy-3-methylglutaryl-coenzyme A reductase, found in Ganoderma lucidum (Ling zhi medicinal fungus).